The following is a 332-amino-acid chain: Lipoyl synthase (332 aa).

Positions 55, 60, 66, 81, 85, 88, and 292 each coordinate [4Fe-4S] cluster. One can recognise a Radical SAM core domain in the interval 67–281 (WEDREATFLI…SDEAERIGFL (215 aa)).

This sequence belongs to the radical SAM superfamily. Lipoyl synthase family. The cofactor is [4Fe-4S] cluster.

It localises to the cytoplasm. It carries out the reaction [[Fe-S] cluster scaffold protein carrying a second [4Fe-4S](2+) cluster] + N(6)-octanoyl-L-lysyl-[protein] + 2 oxidized [2Fe-2S]-[ferredoxin] + 2 S-adenosyl-L-methionine + 4 H(+) = [[Fe-S] cluster scaffold protein] + N(6)-[(R)-dihydrolipoyl]-L-lysyl-[protein] + 4 Fe(3+) + 2 hydrogen sulfide + 2 5'-deoxyadenosine + 2 L-methionine + 2 reduced [2Fe-2S]-[ferredoxin]. It participates in protein modification; protein lipoylation via endogenous pathway; protein N(6)-(lipoyl)lysine from octanoyl-[acyl-carrier-protein]: step 2/2. In terms of biological role, catalyzes the radical-mediated insertion of two sulfur atoms into the C-6 and C-8 positions of the octanoyl moiety bound to the lipoyl domains of lipoate-dependent enzymes, thereby converting the octanoylated domains into lipoylated derivatives. This Beutenbergia cavernae (strain ATCC BAA-8 / DSM 12333 / CCUG 43141 / JCM 11478 / NBRC 16432 / NCIMB 13614 / HKI 0122) protein is Lipoyl synthase.